Consider the following 100-residue polypeptide: Small ribosomal subunit protein uS14c (100 aa).

This sequence belongs to the universal ribosomal protein uS14 family. In terms of assembly, part of the 30S ribosomal subunit.

The protein localises to the plastid. Its subcellular location is the chloroplast. In terms of biological role, binds 16S rRNA, required for the assembly of 30S particles. This is Small ribosomal subunit protein uS14c from Cryptomeria japonica (Japanese cedar).